The chain runs to 889 residues: Chromatin structure-remodeling complex subunit RSC2 (889 aa).

Residues 12–120 (QNSSALYKDL…KYLKDTIYPN (109 aa)) form the Bromo 1 domain. Positions 151-268 (EKAEEVARAN…QVSRTQVKRG (118 aa)) are disordered. Low complexity predominate over residues 158-174 (RANAARAESSSSMNSTE). Positions 197–209 (NNDEDYEATDMDI) are enriched in acidic residues. Residues 210-222 (DNPKDADFPDLIR) show a composition bias toward basic and acidic residues. Residues 241–250 (STTPSHSGTP) are compositionally biased toward polar residues. The segment covering 255–268 (PRHRQVSRTQVKRG) has biased composition (basic residues). The Bromo 2 domain maps to 280–382 (RMKNVMKVLK…KTFTSLARFE (103 aa)). The 119-residue stretch at 408-526 (ISYHVGDWAL…ESDKIFNKIR (119 aa)) folds into the BAH domain. The tract at residues 601–624 (GEYATSDDCPRYIIRPNDSPEEGQ) is disordered. At tyrosine 612 the chain carries Phosphotyrosine. Phosphoserine is present on serine 682. A disordered region spans residues 831–865 (EVEETMEDVTGKDKDDDGLEPDVENEKESLPGPFV).

The protein belongs to the RSC1 family. In terms of assembly, component of the two forms of the RSC complex composed of at least either RSC1 or RSC2, and ARP7, ARP9, LDB7, NPL6, RSC3, RSC30, RSC4, RSC58, RSC6, RSC8, RSC9, SFH1, STH1, HTL1 and probably RTT102. The complexes interact with histone and histone variant components of centromeric chromatin.

It localises to the nucleus. Functionally, component of the chromatin structure remodeling complex (RSC), which is involved in transcription regulation and nucleosome positioning. RSC is responsible for the transfer of a histone octamer from a nucleosome core particle to naked DNA. The reaction requires ATP and involves an activated RSC-nucleosome intermediate. Remodeling reaction also involves DNA translocation, DNA twist and conformational change. As a reconfigurer of centromeric and flanking nucleosomes, RSC complex is required both for proper kinetochore function in chromosome segregation and, via a PKC1-dependent signaling pathway, for organization of the cellular cytoskeleton. This subunit is involved in meiotic sporulation through regulating IME2 expression, and is also essential for 2-micron plasmid maintenance and for normal REP1 protein localization. This Saccharomyces cerevisiae (strain ATCC 204508 / S288c) (Baker's yeast) protein is Chromatin structure-remodeling complex subunit RSC2 (RSC2).